We begin with the raw amino-acid sequence, 151 residues long: Putative truncated GMC-type inactive oxidoreductase L893 (151 aa).

Belongs to the GMC oxidoreductase family.

It localises to the virion. The protein is Putative truncated GMC-type inactive oxidoreductase L893 of Acanthamoeba polyphaga (Amoeba).